A 441-amino-acid polypeptide reads, in one-letter code: tRNA modification GTPase MnmE (441 aa).

Residues Arg21, Glu78, and Lys117 each coordinate (6S)-5-formyl-5,6,7,8-tetrahydrofolate. The TrmE-type G domain occupies 211–363; the sequence is GIVMTIVGKP…LENKIVSKVK (153 aa). Asn221 contributes to the K(+) binding site. GTP contacts are provided by residues 221-226, 240-246, and 265-268; these read NSGKST, TDIPGTT, and DTAG. Mg(2+) is bound at residue Ser225. K(+)-binding residues include Thr240, Ile242, and Thr245. Residue Thr246 participates in Mg(2+) binding. Position 441 (Lys441) interacts with (6S)-5-formyl-5,6,7,8-tetrahydrofolate.

The protein belongs to the TRAFAC class TrmE-Era-EngA-EngB-Septin-like GTPase superfamily. TrmE GTPase family. In terms of assembly, homodimer. Heterotetramer of two MnmE and two MnmG subunits. The cofactor is K(+).

The protein localises to the cytoplasm. In terms of biological role, exhibits a very high intrinsic GTPase hydrolysis rate. Involved in the addition of a carboxymethylaminomethyl (cmnm) group at the wobble position (U34) of certain tRNAs, forming tRNA-cmnm(5)s(2)U34. The protein is tRNA modification GTPase MnmE of Thermosipho melanesiensis (strain DSM 12029 / CIP 104789 / BI429).